The following is a 518-amino-acid chain: Mitochondrial 2-methylisocitrate lyase (518 aa).

It belongs to the isocitrate lyase/PEP mutase superfamily. Isocitrate lyase family.

The protein localises to the mitochondrion matrix. Its subcellular location is the cytoplasm. It carries out the reaction (2S,3R)-3-hydroxybutane-1,2,3-tricarboxylate = pyruvate + succinate. The protein operates within organic acid metabolism; propanoate degradation. Functionally, catalyzes the formation of pyruvate and succinate from 2-methylisocitrate during the metabolism of endogenous propionyl-CoA. Does not act on isocitrate. In Schizosaccharomyces pombe (strain 972 / ATCC 24843) (Fission yeast), this protein is Mitochondrial 2-methylisocitrate lyase (icl2).